Here is a 344-residue protein sequence, read N- to C-terminus: L-rhamnose-proton symporter (344 aa).

The next 10 helical transmembrane spans lie at 4–24, 38–58, 72–92, 101–121, 137–157, 175–195, 214–234, 259–279, 290–310, and 321–341; these read AITMGIFWHLIGAASAACFYA, WSVGGTVSWLILPWTISAILL, TLLPVFLFGAMWGIGNINYGL, MGIGIAIGITLIVGTLMTPIL, TLLGVLVAVIGVGIVTRAGQL, LVLAVMCGIFSAGMSFAMNAA, LPSYVVIMGGGALVNLGFCFI, VLLSALGGLMWYLQFFFYAWG, MSWMLHMSFYVLCGGMVGLVL, and VGVLSLGCVVIIIAANIVGLG.

It belongs to the L-rhamnose transporter (TC 2.A.7.6) family.

Its subcellular location is the cell inner membrane. It carries out the reaction L-rhamnopyranose(in) + H(+)(in) = L-rhamnopyranose(out) + H(+)(out). Its function is as follows. Uptake of L-rhamnose across the cytoplasmic membrane with the concomitant transport of protons into the cell (symport system). This is L-rhamnose-proton symporter from Enterobacter sp. (strain 638).